The primary structure comprises 132 residues: Interleukin-4 (132 aa).

The first 24 residues, 1 to 24, serve as a signal peptide directing secretion; the sequence is MGLTSQLIPTLVCLLALTSTFVHG. Asn-28, Asn-45, Asn-62, and Asn-101 each carry an N-linked (GlcNAc...) asparagine glycan. Disulfide bonds link Cys-48–Cys-84 and Cys-70–Cys-104.

This sequence belongs to the IL-4/IL-13 family.

It is found in the secreted. In terms of biological role, participates in at least several B-cell activation processes as well as of other cell types. It is a costimulator of DNA-synthesis. It induces the expression of class II MHC molecules on resting B-cells. It enhances both secretion and cell surface expression of IgE and IgG1. It also regulates the expression of the low affinity Fc receptor for IgE (CD23) on both lymphocytes and monocytes. Positively regulates IL31RA expression in macrophages. Stimulates autophagy in dendritic cells by interfering with mTORC1 signaling and through the induction of RUFY4. This chain is Interleukin-4 (IL4), found in Ailuropoda melanoleuca (Giant panda).